We begin with the raw amino-acid sequence, 475 residues long: MAFASEDNVYHSSNAVYRAPSNHQEADQEALLGKLLDYPAPGLQRPEDRFNGAYIIFFCLGIGGLLPWNFFVTAKEYWAYKLRNCSSPASGEDPEDMDILNYFESYLAVASTVPSLLFLVANFLLVNRVQVHVRVLASLSVSLAIFVVMIVLVKVDTSSWTRGFFSLTIACMAIISSSSTIFNSSVYGLTGSFPMRNAQALISGGAMGGTVSAVALLVDLAASSDVRDSTLAFFLMAAVFLGLCMGLYLLLSQLEYARYYMRPVAPVRVFSGEDNPSQDAPSASSVAPASRVMHTPPLGPILKKTASLGFCAVSLYFVTAFIIPAISTNIQSMHKGTGSPWTSKFFVPLTVFLLFNFADLCGRQVTAWIQVPGPRSKLLPGLVVSRFCLVPLFLLCNYQPRSHLTKVLFQSDIYPVLFTCLLGLSNGYLSTLVLIYGPKIVPRELAEATSVVMLFYMSVGLMLGSACAALLEHFI.

Over 1-51 (MAFASEDNVYHSSNAVYRAPSNHQEADQEALLGKLLDYPAPGLQRPEDRFN) the chain is Cytoplasmic. Ser-21 bears the Phosphoserine mark. The Dileucine internalization motif motif lies at 31 to 32 (LL). Residues 52–72 (GAYIIFFCLGIGGLLPWNFFV) form a helical membrane-spanning segment. At 73–105 (TAKEYWAYKLRNCSSPASGEDPEDMDILNYFES) the chain is on the extracellular side. A glycan (N-linked (GlcNAc...) asparagine) is linked at Asn-84. The helical transmembrane segment at 106 to 126 (YLAVASTVPSLLFLVANFLLV) threads the bilayer. The Cytoplasmic segment spans residues 127-134 (NRVQVHVR). Residues 135-155 (VLASLSVSLAIFVVMIVLVKV) traverse the membrane as a helical segment. The Extracellular segment spans residues 156 to 162 (DTSSWTR). The helical transmembrane segment at 163–183 (GFFSLTIACMAIISSSSTIFN) threads the bilayer. The Cytoplasmic portion of the chain corresponds to 184-199 (SSVYGLTGSFPMRNAQ). A helical membrane pass occupies residues 200 to 220 (ALISGGAMGGTVSAVALLVDL). Residues 221–230 (AASSDVRDST) lie on the Extracellular side of the membrane. Residues 231–251 (LAFFLMAAVFLGLCMGLYLLL) form a helical membrane-spanning segment. The Cytoplasmic portion of the chain corresponds to 252–305 (SQLEYARYYMRPVAPVRVFSGEDNPSQDAPSASSVAPASRVMHTPPLGPILKKT). Residues 306-326 (ASLGFCAVSLYFVTAFIIPAI) form a helical membrane-spanning segment. At 327-340 (STNIQSMHKGTGSP) the chain is on the extracellular side. A helical transmembrane segment spans residues 341–361 (WTSKFFVPLTVFLLFNFADLC). Over 362-377 (GRQVTAWIQVPGPRSK) the chain is Cytoplasmic. A helical membrane pass occupies residues 378–398 (LLPGLVVSRFCLVPLFLLCNY). Residues 399-415 (QPRSHLTKVLFQSDIYP) are Extracellular-facing. A helical membrane pass occupies residues 416 to 436 (VLFTCLLGLSNGYLSTLVLIY). The Cytoplasmic portion of the chain corresponds to 437–450 (GPKIVPRELAEATS). The chain crosses the membrane as a helical span at residues 451 to 471 (VVMLFYMSVGLMLGSACAALL). At 472 to 475 (EHFI) the chain is on the extracellular side.

Belongs to the SLC29A/ENT transporter (TC 2.A.57) family. As to expression, expressed in macrophages.

The protein resides in the lysosome membrane. The protein localises to the late endosome membrane. It localises to the mitochondrion membrane. It is found in the cell membrane. The enzyme catalyses adenosine(in) = adenosine(out). It carries out the reaction guanosine(in) = guanosine(out). It catalyses the reaction inosine(in) = inosine(out). The catalysed reaction is uridine(out) = uridine(in). The enzyme catalyses cytidine(in) = cytidine(out). It carries out the reaction thymidine(in) = thymidine(out). It catalyses the reaction 2'-deoxyadenosine(in) = 2'-deoxyadenosine(out). The catalysed reaction is 2'-deoxycytidine(in) = 2'-deoxycytidine(out). The enzyme catalyses guanine(out) = guanine(in). It carries out the reaction uracil(in) = uracil(out). It catalyses the reaction (R)-noradrenaline(out) = (R)-noradrenaline(in). The catalysed reaction is dopamine(out) = dopamine(in). The enzyme catalyses serotonin(out) = serotonin(in). It carries out the reaction tyramine(in) = tyramine(out). It catalyses the reaction ATP(in) = ATP(out). Uniporter that mediates the facilitative transport of nucleoside across lysosomal and mitochondrial membranes. Functions as a non-electrogenic Na(+)-independent transporter. Substrate transport is pH-dependent and enhanced under acidic condition, probably reflecting the location of the transporter in acidic intracellular compartments. Proton is not a cotransporting ion but most likely change the ionization state of the transporter which dictates transport-permissible/impermissible conformation for nucleoside translocation. May direct the nucleoside transport from lysosomes to cytosol or cytosol to mitochondria to facilitate the fundamental function of salvage synthesis of nucleic acids. Involved in the transport of nucleosides (adenosine, guanosine, uridine, thymidine, cytidine and inosine) and deoxynucleosides (deoxyadenosine, deoxycytidine). Also mediates transport of purine nucleobases (adenine, guanine), and pyrimidine nucleobases (uracil). Also able to transport monoamine neurotransmitters dopamine, serotonin, noradrenaline and tyramine. Capable of transporting ATP. Mediates nucleoside export from lysosomes in macrophages, which regulates macrophage functions and numbers. The polypeptide is Equilibrative nucleoside transporter 3 (Mus musculus (Mouse)).